Here is a 251-residue protein sequence, read N- to C-terminus: Blue-light absorbing proteorhodopsin (251 aa).

The first 18 residues, 1–18 (MGKLLLILGSAIALPSFA), serve as a signal peptide directing secretion. 7 helical membrane-spanning segments follow: residues 30–50 (VGVS…FFFV), 65–85 (VSGL…GVWI), 97–117 (IDWL…LAAC), 120–140 (VAAS…GAGF), 144–164 (AGLA…LYMI), 190–210 (MMMI…AGYL), and 223–243 (LIYN…IWNV). Residue K233 is modified to N6-(retinylidene)lysine.

Belongs to the archaeal/bacterial/fungal opsin family. Post-translationally, contains one covalently linked retinal chromophore.

It is found in the cell membrane. Light-driven proton pump. May have a regulatory rather than energy harvesting function, based on light-induced opening of proton channels, to modulate cell physiology depending on light intensity variations. Could be, therefore, a sensory rhodopsin, potentially associated with a transducer component. This is Blue-light absorbing proteorhodopsin from Gamma-proteobacterium Hot 75m4.